A 311-amino-acid chain; its full sequence is MPATDTNSTHTTPLHPDAQHTLPLHHSNTQPHVQTSDKHADEEHRTQMELDAADYAACAQARQHLYDQTQPLLLAYPNTNPQDSAHFPTENQHQLTHPLHNIGEGAALGYPVPRAEIRRGGGDWADSASDFDADCWCMWGRFGTMGRQPVVTLLLARQRDGLADWNVVRCRGTGFRAHDSEDGVSVWRQHLVFLLGGHGRRVQLERPSAGEAQARGLLPRIRITPISTSPRRKPPHPATSTASHHPHASPRSDHTLFPVPSTPSATVHNPRNYAVQLHAETTRTWRWAQRGERGAWMPAETFTCPKDKRPW.

The span at 1 to 12 (MPATDTNSTHTT) shows a compositional bias: polar residues. Disordered stretches follow at residues 1 to 44 (MPAT…DEEH) and 205 to 268 (ERPS…ATVH). The span at 35–44 (TSDKHADEEH) shows a compositional bias: basic and acidic residues.

The protein belongs to the HHV-5 HKLF1 family.

This is an uncharacterized protein from Human cytomegalovirus (strain AD169) (HHV-5).